The sequence spans 361 residues: CRISPR system associated protein Cas8 (361 aa).

Monomer. Can form a Cascade complex with Csa5, Cas7, Cas5a, Cas3 and Cas3'.

Its function is as follows. CRISPR (clustered regularly interspaced short palindromic repeat) is an adaptive immune system that provides protection against mobile genetic elements (viruses, transposable elements and conjugative plasmids). CRISPR clusters contain sequences complementary to antecedent mobile elements and target invading nucleic acids. CRISPR clusters are transcribed and processed into CRISPR RNA (crRNA). This is CRISPR system associated protein Cas8 (cas8a2) from Thermoproteus tenax (strain ATCC 35583 / DSM 2078 / JCM 9277 / NBRC 100435 / Kra 1).